The primary structure comprises 213 residues: T-cell surface glycoprotein CD8 beta chain (213 aa).

The N-terminal stretch at 1–21 (MQPWLWLVFSMKLAALWSSSA) is a signal peptide. Residues 22–133 (LIQTPSSLLV…KMVFGTGTKL (112 aa)) form the Ig-like V-type domain. Residues 22 to 175 (LIQTPSSLLV…QKGLTCSLTT (154 aa)) lie on the Extracellular side of the membrane. Asparagine 34 carries an N-linked (GlcNAc...) asparagine glycan. A disulfide bridge connects residues cysteine 41 and cysteine 117. A helical transmembrane segment spans residues 176-196 (LSLLVVCILLLLAFLGVAVYF). At 197–213 (YCVRRRARIHFMKQFHK) the chain is on the cytoplasmic side.

As to quaternary structure, forms disulfide-linked heterodimers with CD8A at the cell surface. Interacts with CD3D; this interaction couples TCR-CD3 with CD8. Interacts with LCK. Palmitoylated at the cytoplasmic tail and thereby targets the heterodimer CD8A/CD8B to lipid rafts unlike CD8A homodimers.

It is found in the membrane. Functionally, integral membrane glycoprotein that plays an essential role in the immune response and serves multiple functions in responses against both external and internal offenses. In T-cells, functions primarily as a coreceptor for MHC class I molecule:peptide complex. The antigens presented by class I peptides are derived from cytosolic proteins while class II derived from extracellular proteins. Interacts simultaneously with the T-cell receptor (TCR) and the MHC class I proteins presented by antigen presenting cells (APCs). In turn, recruits the Src kinase LCK to the vicinity of the TCR-CD3 complex. A palmitoylation site in the cytoplasmic tail of CD8B chain contributes to partitioning of CD8 into the plasma membrane lipid rafts where signaling proteins are enriched. Once LCK recruited, it initiates different intracellular signaling pathways by phosphorylating various substrates ultimately leading to lymphokine production, motility, adhesion and activation of cytotoxic T-lymphocytes (CTLs). Additionally, plays a critical role in thymic selection of CD8+ T-cells. The polypeptide is T-cell surface glycoprotein CD8 beta chain (Cd8b) (Mus musculus (Mouse)).